We begin with the raw amino-acid sequence, 536 residues long: Mannuronan C5-epimerase (536 aa).

Residues 1-36 (MNSHASNGRSRNWPHALLESALLTSALLMASSVALA) form the signal peptide. 5 PbH1 repeats span residues 298 to 320 (TRDF…DPHD), 322 to 345 (SHGL…IISR), 347 to 369 (VDNS…VLDR), 371 to 393 (SVGN…TLYE), and 394 to 416 (SGNN…RVRN). His319 acts as the Proton acceptor in catalysis.

It belongs to the D-mannuronate C5-epimerase family.

It localises to the periplasm. The catalysed reaction is [(1-&gt;4)-beta-D-mannuronosyl](n) = [alginate](n). Its pathway is glycan biosynthesis; alginate biosynthesis. Catalyzes the epimerization of beta-D-mannuronate to alpha-L-guluronate during the synthesis of the linear polysaccharide alginate. In addition, is part of a periplasmic protein complex that protects alginate from degradation by AlgL by channeling the newly formed alginate polymer through a scaffold that transfers the alginate polymer through the periplasmic space to the outer membrane secretin AlgE. This is Mannuronan C5-epimerase (algG) from Pseudomonas syringae pv. tomato (strain ATCC BAA-871 / DC3000).